The chain runs to 901 residues: HTH-type transcriptional regulator MalT (901 aa).

39–46 (SPAGYGKT) contacts ATP. Residues 829–894 (ELIRTSPLTQ…DAVQHAQQLL (66 aa)) form the HTH luxR-type domain. Positions 853 to 872 (NDQIAGELDVAATTIKTHIR) form a DNA-binding region, H-T-H motif.

The protein belongs to the MalT family. Monomer in solution. Oligomerizes to an active state in the presence of the positive effectors ATP and maltotriose.

With respect to regulation, activated by ATP and maltotriose, which are both required for DNA binding. Functionally, positively regulates the transcription of the maltose regulon whose gene products are responsible for uptake and catabolism of malto-oligosaccharides. Specifically binds to the promoter region of its target genes, recognizing a short DNA motif called the MalT box. This Cronobacter sakazakii (strain ATCC BAA-894) (Enterobacter sakazakii) protein is HTH-type transcriptional regulator MalT.